A 479-amino-acid chain; its full sequence is Altronate oxidoreductase (479 aa).

18-29 (IIQFGEGNFLRA) contributes to the NAD(+) binding site.

The protein belongs to the mannitol dehydrogenase family. UxaB subfamily.

The enzyme catalyses D-altronate + NAD(+) = keto-D-tagaturonate + NADH + H(+). It functions in the pathway carbohydrate metabolism; pentose and glucuronate interconversion. The chain is Altronate oxidoreductase from Bacteroides thetaiotaomicron (strain ATCC 29148 / DSM 2079 / JCM 5827 / CCUG 10774 / NCTC 10582 / VPI-5482 / E50).